Here is a 163-residue protein sequence, read N- to C-terminus: SsrA-binding protein (163 aa).

Belongs to the SmpB family.

Its subcellular location is the cytoplasm. In terms of biological role, required for rescue of stalled ribosomes mediated by trans-translation. Binds to transfer-messenger RNA (tmRNA), required for stable association of tmRNA with ribosomes. tmRNA and SmpB together mimic tRNA shape, replacing the anticodon stem-loop with SmpB. tmRNA is encoded by the ssrA gene; the 2 termini fold to resemble tRNA(Ala) and it encodes a 'tag peptide', a short internal open reading frame. During trans-translation Ala-aminoacylated tmRNA acts like a tRNA, entering the A-site of stalled ribosomes, displacing the stalled mRNA. The ribosome then switches to translate the ORF on the tmRNA; the nascent peptide is terminated with the 'tag peptide' encoded by the tmRNA and targeted for degradation. The ribosome is freed to recommence translation, which seems to be the essential function of trans-translation. The polypeptide is SsrA-binding protein (Buchnera aphidicola subsp. Schizaphis graminum (strain Sg)).